Here is a 214-residue protein sequence, read N- to C-terminus: Phosphatidylserine decarboxylase proenzyme (214 aa).

Catalysis depends on serine 182, which acts as the Schiff-base intermediate with substrate; via pyruvic acid. Serine 182 is subject to Pyruvic acid (Ser); by autocatalysis.

The protein belongs to the phosphatidylserine decarboxylase family. PSD-A subfamily. As to quaternary structure, heterodimer of a large membrane-associated beta subunit and a small pyruvoyl-containing alpha subunit. Pyruvate serves as cofactor. Post-translationally, is synthesized initially as an inactive proenzyme. Formation of the active enzyme involves a self-maturation process in which the active site pyruvoyl group is generated from an internal serine residue via an autocatalytic post-translational modification. Two non-identical subunits are generated from the proenzyme in this reaction, and the pyruvate is formed at the N-terminus of the alpha chain, which is derived from the carboxyl end of the proenzyme. The post-translation cleavage follows an unusual pathway, termed non-hydrolytic serinolysis, in which the side chain hydroxyl group of the serine supplies its oxygen atom to form the C-terminus of the beta chain, while the remainder of the serine residue undergoes an oxidative deamination to produce ammonia and the pyruvoyl prosthetic group on the alpha chain.

It localises to the cell membrane. It carries out the reaction a 1,2-diacyl-sn-glycero-3-phospho-L-serine + H(+) = a 1,2-diacyl-sn-glycero-3-phosphoethanolamine + CO2. It functions in the pathway phospholipid metabolism; phosphatidylethanolamine biosynthesis; phosphatidylethanolamine from CDP-diacylglycerol: step 2/2. Functionally, catalyzes the formation of phosphatidylethanolamine (PtdEtn) from phosphatidylserine (PtdSer). This chain is Phosphatidylserine decarboxylase proenzyme, found in Burkholderia lata (strain ATCC 17760 / DSM 23089 / LMG 22485 / NCIMB 9086 / R18194 / 383).